A 351-amino-acid chain; its full sequence is MSQARPATLRVAVLGAGSWGTALAAAASRRHPTVLWARDGAQAQAMAARHENTRYLPGVALPPALQVSADLAQALAHLAHDPAHALIILGVPVAGMTPLCTELAARLPALGLQAVPLVWTCKGFEEQTARLPHETVQAALGAMPGLAAGVLSGPSFAREVAQGLPVALTVASESSAVRDAVTTALHGAAVRIYASTDVVGVEVGGALKNVIAVACGICDGLALGTNARAALITRGLAEMARFGAALGAQQETFAGLTGLGDLVLTATGELSRNRRVGLEIGAGRKLADILASGMTAEGVRCARAARDRARALNIELPITEAVCAVLFEGLSPMTAVSALLAREARPESPTP.

Residues Ser18, Trp19, Arg38, and Lys122 each coordinate NADPH. 3 residues coordinate sn-glycerol 3-phosphate: Lys122, Gly153, and Ser155. NADPH is bound at residue Ala157. 5 residues coordinate sn-glycerol 3-phosphate: Lys208, Asp261, Ser271, Arg272, and Asn273. Catalysis depends on Lys208, which acts as the Proton acceptor. Residue Arg272 coordinates NADPH. Glu297 provides a ligand contact to NADPH.

The protein belongs to the NAD-dependent glycerol-3-phosphate dehydrogenase family.

It is found in the cytoplasm. The enzyme catalyses sn-glycerol 3-phosphate + NAD(+) = dihydroxyacetone phosphate + NADH + H(+). The catalysed reaction is sn-glycerol 3-phosphate + NADP(+) = dihydroxyacetone phosphate + NADPH + H(+). Its pathway is membrane lipid metabolism; glycerophospholipid metabolism. Catalyzes the reduction of the glycolytic intermediate dihydroxyacetone phosphate (DHAP) to sn-glycerol 3-phosphate (G3P), the key precursor for phospholipid synthesis. The protein is Glycerol-3-phosphate dehydrogenase [NAD(P)+] of Bordetella bronchiseptica (strain ATCC BAA-588 / NCTC 13252 / RB50) (Alcaligenes bronchisepticus).